The sequence spans 400 residues: Lipase member N (400 aa).

An N-terminal signal peptide occupies residues 1–19 (MPMMWLFLTTACLIPGTLS). The AB hydrolase-1 domain maps to 81 to 381 (PVVYMQHALF…DWNHFDFVWG (301 aa)). The active-site Nucleophile is the Ser-175. Cys-249 and Cys-258 are disulfide-bonded. Asn-274 is a glycosylation site (N-linked (GlcNAc...) asparagine). Catalysis depends on charge relay system residues Asp-346 and His-375.

This sequence belongs to the AB hydrolase superfamily. Lipase family. Highly expressed in the epidermis. Also detected in other tissues, although at much lower levels, including liver and kidney.

The protein resides in the secreted. It catalyses the reaction a sterol ester + H2O = a sterol + a fatty acid + H(+). The catalysed reaction is a triacylglycerol + H2O = a 1,2-diacylglycerol + a fatty acid + H(+). It carries out the reaction a triacylglycerol + H2O = a diacylglycerol + a fatty acid + H(+). The enzyme catalyses a cholesterol ester + H2O = cholesterol + a fatty acid + H(+). In terms of biological role, plays a highly specific role in the last step of keratinocyte differentiation. Contains two distinct domains: the alpha/beta hydrolase fold and the abhydrolase-associated lipase region, also features the consensus sequence of the active site of a genuine lipase. May have an essential function in lipid metabolism of the most differentiated epidermal layers. The sequence is that of Lipase member N (Lipn) from Mus musculus (Mouse).